Consider the following 227-residue polypeptide: YEATS domain-containing protein 4 (227 aa).

The region spanning 15-158 (RVKGVTIVKP…AMMQQLLTTS (144 aa)) is the YEATS domain. Lysine 37 is covalently cross-linked (Glycyl lysine isopeptide (Lys-Gly) (interchain with G-Cter in SUMO2)). The interval 93–97 (WGEFE) is diacetylated histone H3 binding. The interaction with MLLT10 stretch occupies residues 163–227 (LGAYKHETEF…LEEDDQTKDI (65 aa)). An interaction with TACC1 region spans residues 168–227 (HETEFAELEVKTREKLEAAKKKTSFEIAELKERLKASRETINCLKNEIRKLEEDDQTKDI). Residues 178 to 226 (KTREKLEAAKKKTSFEIAELKERLKASRETINCLKNEIRKLEEDDQTKD) are a coiled coil.

Component of numerous complexes with chromatin remodeling and histone acetyltransferase activity. Component of the NuA4 histone acetyltransferase complex which contains the catalytic subunit KAT5/TIP60 and the subunits EP400, TRRAP/PAF400, BRD8/SMAP, EPC1, DMAP1/DNMAP1, RUVBL1/TIP49, RUVBL2, ING3, actin, ACTL6A/BAF53A, MORF4L1/MRG15, MORF4L2/MRGX, MRGBP, YEATS4/GAS41, VPS72/YL1 and MEAF6. The NuA4 complex interacts with MYC and the adenovirus E1A protein. Component of a NuA4-related complex which contains EP400, TRRAP/PAF400, SRCAP, BRD8/SMAP, EPC1, DMAP1/DNMAP1, RUVBL1/TIP49, RUVBL2, actin, ACTL6A/BAF53A, VPS72 and YEATS4/GAS41. Interacts with MLLT10/AF10. Also interacts with the SWI/SNF component SMARCB1/BAF47, TACC1 and TACC2, and the nuclear matrix protein NUMA1.

It is found in the nucleus. Its function is as follows. Chromatin reader component of the NuA4 histone acetyltransferase (HAT) complex, a complex involved in transcriptional activation of select genes principally by acetylation of nucleosomal histones H4 and H2A. Specifically recognizes and binds acylated histone H3, with a preference for histone H3 diacetylated at 'Lys-18' and 'Lys-27' (H3K18ac and H3K27ac) or histone H3 diacetylated at 'Lys-14' and 'Lys-27' (H3K14ac and H3K27ac). Also able to recognize and bind crotonylated histone H3. May also recognize and bind histone H3 succinylated at 'Lys-122' (H3K122succ); additional evidences are however required to confirm this result in vivo. Plays a key role in histone variant H2AZ1/H2A.Z deposition into specific chromatin regions: recognizes and binds H3K14ac and H3K27ac on the promoters of actively transcribed genes and recruits NuA4-related complex to deposit H2AZ1/H2A.Z. H2AZ1/H2A.Z deposition is required for maintenance of embryonic stem cell. This is YEATS domain-containing protein 4 from Mus musculus (Mouse).